The chain runs to 379 residues: Cytochrome b (379 aa).

Helical transmembrane passes span 33 to 53 (FGSLLGMCLVIQILTGLFLAM), 77 to 98 (WLIRYLHANGASMFFICLFIHV), 113 to 133 (WNIGIILLLTTMATAFVGYVL), and 178 to 198 (FFAFHFILPFIIAAFALVHLL). The heme b site is built by His83 and His97. The heme b site is built by His182 and His196. A ubiquinone is bound at residue His201. The next 4 helical transmembrane spans lie at 226 to 246 (TKDLLGIFLLLLVLMILALFF), 288 to 308 (LGGVLALVLSILILATFPLLN), 320 to 340 (VTQVIYWIFIANLLVLTWIGG), and 347 to 367 (FTTIGQIASITYFAIIIILIP).

It belongs to the cytochrome b family. In terms of assembly, the cytochrome bc1 complex contains 11 subunits: 3 respiratory subunits (MT-CYB, CYC1 and UQCRFS1), 2 core proteins (UQCRC1 and UQCRC2) and 6 low-molecular weight proteins (UQCRH/QCR6, UQCRB/QCR7, UQCRQ/QCR8, UQCR10/QCR9, UQCR11/QCR10 and a cleavage product of UQCRFS1). This cytochrome bc1 complex then forms a dimer. It depends on heme b as a cofactor.

It is found in the mitochondrion inner membrane. In terms of biological role, component of the ubiquinol-cytochrome c reductase complex (complex III or cytochrome b-c1 complex) that is part of the mitochondrial respiratory chain. The b-c1 complex mediates electron transfer from ubiquinol to cytochrome c. Contributes to the generation of a proton gradient across the mitochondrial membrane that is then used for ATP synthesis. The sequence is that of Cytochrome b (MT-CYB) from Akodon paranaensis (Parana grass mouse).